The sequence spans 182 residues: UPF0397 protein SPG_0438 (182 aa).

The next 5 membrane-spanning stretches (helical) occupy residues 10–30, 46–66, 73–93, 109–129, and 148–168; these read VVAVGIGAALFVVIGMINIPT, LLSIIFGPIIGLLVGLIGHAI, YGLWWTWIIASGLFGLVVGLF, ILIFNLIQLLANALVWGVLAP, and IVAGIANGVSVAIAGTLLLLA.

The protein belongs to the UPF0397 family.

It localises to the cell membrane. The polypeptide is UPF0397 protein SPG_0438 (Streptococcus pneumoniae serotype 19F (strain G54)).